The following is a 296-amino-acid chain: Peptide transport system permease protein SapC (296 aa).

Residues 1-28 lie on the Cytoplasmic side of the membrane; sequence MPYDSVYSEKRPPGTLRTAWRKFYSDAP. A helical membrane pass occupies residues 29-49; the sequence is AMVGLYGCAGLALLCIFGGWI. Residues 50 to 98 are Periplasmic-facing; sequence APYGIDQQFLGYQLLPPSWSRYGEVSFFLGTDDLGRDVLSRLLSGAAPT. The chain crosses the membrane as a helical span at residues 99–119; it reads VGGAFIVTLAATLCGLVLGVV. The ABC transmembrane type-1 domain maps to 99–284; sequence VGGAFIVTLA…LSVLLVNLLG (186 aa). The Cytoplasmic segment spans residues 120–133; that stretch reads AGATHGLRSAVLNH. Residues 134-154 form a helical membrane-spanning segment; it reads ILDTLLSIPSLLLAIIVVAFA. Residues 155 to 196 are Periplasmic-facing; that stretch reads GPHLSHAMFAVWLALLPRMVRSVYSMVHDELEKEYVIAARLD. The helical transmembrane segment at 197–217 threads the bilayer; that stretch reads GATTLNILWFAILPNITAGLV. At 218–222 the chain is on the cytoplasmic side; it reads TEITR. Residues 223–243 form a helical membrane-spanning segment; it reads ALSMAILDIAALGFLDLGAQL. Residues 244–257 lie on the Periplasmic side of the membrane; that stretch reads PSPEWGAMLGDALE. A helical membrane pass occupies residues 258 to 278; the sequence is LIYVAPWTVMLPGAAITLSVL. Over 279 to 296 the chain is Cytoplasmic; the sequence is LVNLLGDGIRRAIIAGVE.

This sequence belongs to the binding-protein-dependent transport system permease family. OppBC subfamily.

It is found in the cell inner membrane. Its function is as follows. Involved in a peptide intake transport system that plays a role in the resistance to antimicrobial peptides. This chain is Peptide transport system permease protein SapC (sapC), found in Salmonella typhi.